Consider the following 504-residue polypeptide: Lysine--tRNA ligase (504 aa).

Residues Glu-411 and Glu-418 each contribute to the Mg(2+) site.

It belongs to the class-II aminoacyl-tRNA synthetase family. In terms of assembly, homodimer. The cofactor is Mg(2+).

The protein resides in the cytoplasm. The enzyme catalyses tRNA(Lys) + L-lysine + ATP = L-lysyl-tRNA(Lys) + AMP + diphosphate. The protein is Lysine--tRNA ligase of Clostridium botulinum (strain Loch Maree / Type A3).